The sequence spans 102 residues: Apolipoprotein A-II (102 aa).

A signal peptide spans 1–18 (MKLLAMVALLVTICSLEG). At Met49 the chain carries Methionine sulfoxide.

Belongs to the apolipoprotein A2 family. Monomer. Interacts with NAXE and NDRG1. Plasma.

Its subcellular location is the secreted. May stabilize HDL (high density lipoprotein) structure by its association with lipids, and affect the HDL metabolism. The polypeptide is Apolipoprotein A-II (Apoa2) (Rattus norvegicus (Rat)).